Consider the following 119-residue polypeptide: Ribonuclease pancreatic (119 aa).

Glutamine 1 carries the pyrrolidone carboxylic acid modification. Histidine 10 (proton acceptor) is an active-site residue. 3 cysteine pairs are disulfide-bonded: cysteine 25–cysteine 80, cysteine 39–cysteine 91, and cysteine 57–cysteine 106. 40–44 (KTRNT) provides a ligand contact to substrate. Catalysis depends on histidine 113, which acts as the Proton donor.

Belongs to the pancreatic ribonuclease family. Monomer. Interacts with and forms tight 1:1 complexes with RNH1. Dimerization of two such complexes may occur. Interaction with RNH1 inhibits this protein. As to expression, pancreas.

It is found in the secreted. The enzyme catalyses an [RNA] containing cytidine + H2O = an [RNA]-3'-cytidine-3'-phosphate + a 5'-hydroxy-ribonucleotide-3'-[RNA].. It carries out the reaction an [RNA] containing uridine + H2O = an [RNA]-3'-uridine-3'-phosphate + a 5'-hydroxy-ribonucleotide-3'-[RNA].. Its function is as follows. Endonuclease that catalyzes the cleavage of RNA on the 3' side of pyrimidine nucleotides. Acts on single-stranded and double-stranded RNA. The polypeptide is Ribonuclease pancreatic (Iguana iguana (Common iguana)).